The primary structure comprises 490 residues: Glutamate--tRNA ligase (490 aa).

The 'HIGH' region motif lies at 12–22 (PSPTGTPHVGL). A 'KMSKS' region motif is present at residues 256–260 (KLSKR). ATP is bound at residue K259.

It belongs to the class-I aminoacyl-tRNA synthetase family. Glutamate--tRNA ligase type 1 subfamily. In terms of assembly, monomer.

Its subcellular location is the cytoplasm. The catalysed reaction is tRNA(Glu) + L-glutamate + ATP = L-glutamyl-tRNA(Glu) + AMP + diphosphate. Catalyzes the attachment of glutamate to tRNA(Glu) in a two-step reaction: glutamate is first activated by ATP to form Glu-AMP and then transferred to the acceptor end of tRNA(Glu). The chain is Glutamate--tRNA ligase from Mycobacterium sp. (strain KMS).